The sequence spans 197 residues: ATP-dependent Clp protease proteolytic subunit 2 (197 aa).

Serine 97 serves as the catalytic Nucleophile. Histidine 122 is a catalytic residue.

This sequence belongs to the peptidase S14 family. Fourteen ClpP subunits assemble into 2 heptameric rings which stack back to back to give a disk-like structure with a central cavity, resembling the structure of eukaryotic proteasomes.

The protein resides in the cytoplasm. The enzyme catalyses Hydrolysis of proteins to small peptides in the presence of ATP and magnesium. alpha-casein is the usual test substrate. In the absence of ATP, only oligopeptides shorter than five residues are hydrolyzed (such as succinyl-Leu-Tyr-|-NHMec, and Leu-Tyr-Leu-|-Tyr-Trp, in which cleavage of the -Tyr-|-Leu- and -Tyr-|-Trp bonds also occurs).. Its function is as follows. Cleaves peptides in various proteins in a process that requires ATP hydrolysis. Has a chymotrypsin-like activity. Plays a major role in the degradation of misfolded proteins. This Leptospira interrogans serogroup Icterohaemorrhagiae serovar copenhageni (strain Fiocruz L1-130) protein is ATP-dependent Clp protease proteolytic subunit 2.